We begin with the raw amino-acid sequence, 326 residues long: Thioredoxin reductase (326 aa).

Residue Thr40 to Gln47 participates in FAD binding. Residues Cys141 and Cys144 are joined by a disulfide bond. An FAD-binding site is contributed by Asp291 to Ala300.

The protein belongs to the class-II pyridine nucleotide-disulfide oxidoreductase family. As to quaternary structure, homodimer. The cofactor is FAD.

Its subcellular location is the cytoplasm. It catalyses the reaction [thioredoxin]-dithiol + NADP(+) = [thioredoxin]-disulfide + NADPH + H(+). This is Thioredoxin reductase (trxB) from Buchnera aphidicola subsp. Baizongia pistaciae (strain Bp).